A 227-amino-acid polypeptide reads, in one-letter code: Glutathione S-transferase U18 (227 aa).

In terms of domain architecture, GST N-terminal spans 4 to 83 (EDVKLIGSWA…YIDEAWNSSG (80 aa)). Glutathione contacts are provided by residues 14-15 (SV), 40-41 (SK), 54-55 (KM), and 67-68 (ES). The GST C-terminal domain maps to 90 to 221 (HPYDRAIARF…TKLAEFARKL (132 aa)).

The protein belongs to the GST superfamily. Tau family.

It is found in the cytoplasm. Its subcellular location is the cytosol. The catalysed reaction is RX + glutathione = an S-substituted glutathione + a halide anion + H(+). Its function is as follows. May be involved in the conjugation of reduced glutathione to a wide number of exogenous and endogenous hydrophobic electrophiles and have a detoxification role against certain herbicides. This is Glutathione S-transferase U18 (GSTU18) from Arabidopsis thaliana (Mouse-ear cress).